A 388-amino-acid chain; its full sequence is Succinate--CoA ligase [ADP-forming] subunit beta (388 aa).

ATP is bound by residues K46, 53–55, E99, C102, and E107; that span reads GRG. Mg(2+) contacts are provided by N199 and D213. Substrate-binding positions include N264 and 321 to 323; that span reads GIV.

This sequence belongs to the succinate/malate CoA ligase beta subunit family. As to quaternary structure, heterotetramer of two alpha and two beta subunits. Mg(2+) is required as a cofactor.

The enzyme catalyses succinate + ATP + CoA = succinyl-CoA + ADP + phosphate. It catalyses the reaction GTP + succinate + CoA = succinyl-CoA + GDP + phosphate. Its pathway is carbohydrate metabolism; tricarboxylic acid cycle; succinate from succinyl-CoA (ligase route): step 1/1. Functionally, succinyl-CoA synthetase functions in the citric acid cycle (TCA), coupling the hydrolysis of succinyl-CoA to the synthesis of either ATP or GTP and thus represents the only step of substrate-level phosphorylation in the TCA. The beta subunit provides nucleotide specificity of the enzyme and binds the substrate succinate, while the binding sites for coenzyme A and phosphate are found in the alpha subunit. In Actinobacillus pleuropneumoniae serotype 3 (strain JL03), this protein is Succinate--CoA ligase [ADP-forming] subunit beta.